Here is a 428-residue protein sequence, read N- to C-terminus: MQKLLIEGGHDLTGQVRISGAKNSAVALLPAAILADSAVTIEGLPEISDVDTLGDLLEEIGGSVSRDGQDITIHPEKMMAMPLPNGKVKKLRASYYFMGAMLGKFNKAVIGLPGGCFLGPRPIDQHIKGFEALGAEVTNEQGAIYLRANELRGARIYLDVVSVGATINIMLAAVKAKGRTTIENAAKEPEIIDVATLLTNMGAKIKGVGTDVIRIDGVPSLHGCRHTIIPDRIEAGTYAIAAAAKGKEVIIDNVIPQHLESLIAKLREMDVTIEESDEQLYIARNRPLKSVDIKTLVYPGFPTDLQQPFTSLLTQATHSGVITDTIYSARLKHIDELRRMNAVIKVEGGSVIVSGPVQLEGARVKASDLRAGASLIIAGLLADGITEITGLDHIDRGYERLTEKLSSLGANIWREEMTDIEIMQDQNM.

Position 22-23 (Lys-22–Asn-23) interacts with phosphoenolpyruvate. UDP-N-acetyl-alpha-D-glucosamine is bound at residue Arg-92. Cys-116 serves as the catalytic Proton donor. Position 116 is a 2-(S-cysteinyl)pyruvic acid O-phosphothioketal (Cys-116). UDP-N-acetyl-alpha-D-glucosamine is bound by residues Arg-121 to Gln-125, Asp-304, and Ile-326.

This sequence belongs to the EPSP synthase family. MurA subfamily.

It localises to the cytoplasm. The enzyme catalyses phosphoenolpyruvate + UDP-N-acetyl-alpha-D-glucosamine = UDP-N-acetyl-3-O-(1-carboxyvinyl)-alpha-D-glucosamine + phosphate. Its pathway is cell wall biogenesis; peptidoglycan biosynthesis. Functionally, cell wall formation. Adds enolpyruvyl to UDP-N-acetylglucosamine. The protein is UDP-N-acetylglucosamine 1-carboxyvinyltransferase 2 of Oceanobacillus iheyensis (strain DSM 14371 / CIP 107618 / JCM 11309 / KCTC 3954 / HTE831).